A 256-amino-acid polypeptide reads, in one-letter code: uncharacterized protein (256 aa).

It belongs to the methyltransferase superfamily.

Its subcellular location is the cytoplasm. The protein localises to the nucleus. In terms of biological role, probable methyltransferase. This is an uncharacterized protein from Schizosaccharomyces pombe (strain 972 / ATCC 24843) (Fission yeast).